We begin with the raw amino-acid sequence, 287 residues long: Bifunctional protein FolD (287 aa).

Residues 166–168 (GAS) and Ile232 each bind NADP(+).

This sequence belongs to the tetrahydrofolate dehydrogenase/cyclohydrolase family. In terms of assembly, homodimer.

The catalysed reaction is (6R)-5,10-methylene-5,6,7,8-tetrahydrofolate + NADP(+) = (6R)-5,10-methenyltetrahydrofolate + NADPH. It carries out the reaction (6R)-5,10-methenyltetrahydrofolate + H2O = (6R)-10-formyltetrahydrofolate + H(+). The protein operates within one-carbon metabolism; tetrahydrofolate interconversion. Its function is as follows. Catalyzes the oxidation of 5,10-methylenetetrahydrofolate to 5,10-methenyltetrahydrofolate and then the hydrolysis of 5,10-methenyltetrahydrofolate to 10-formyltetrahydrofolate. The polypeptide is Bifunctional protein FolD (Pectobacterium carotovorum subsp. carotovorum (strain PC1)).